The chain runs to 312 residues: Glyoxylate/hydroxypyruvate reductase A (312 aa).

Arg-227 is a catalytic residue. The active-site Proton donor is the His-275.

Belongs to the D-isomer specific 2-hydroxyacid dehydrogenase family. GhrA subfamily.

It is found in the cytoplasm. The catalysed reaction is glycolate + NADP(+) = glyoxylate + NADPH + H(+). It catalyses the reaction (R)-glycerate + NAD(+) = 3-hydroxypyruvate + NADH + H(+). It carries out the reaction (R)-glycerate + NADP(+) = 3-hydroxypyruvate + NADPH + H(+). Functionally, catalyzes the NADPH-dependent reduction of glyoxylate and hydroxypyruvate into glycolate and glycerate, respectively. The polypeptide is Glyoxylate/hydroxypyruvate reductase A (Salmonella enteritidis PT4 (strain P125109)).